We begin with the raw amino-acid sequence, 309 residues long: Ribosomal RNA small subunit methyltransferase H (309 aa).

Residues 33 to 35 (GGH), Asp53, Phe79, Asp100, and Gln107 each bind S-adenosyl-L-methionine.

The protein belongs to the methyltransferase superfamily. RsmH family.

Its subcellular location is the cytoplasm. The enzyme catalyses cytidine(1402) in 16S rRNA + S-adenosyl-L-methionine = N(4)-methylcytidine(1402) in 16S rRNA + S-adenosyl-L-homocysteine + H(+). Its function is as follows. Specifically methylates the N4 position of cytidine in position 1402 (C1402) of 16S rRNA. This chain is Ribosomal RNA small subunit methyltransferase H, found in Clostridium botulinum (strain Okra / Type B1).